The primary structure comprises 143 residues: MQSTPIILVAIVLLGAALVRAFDEKEALAKLMESAESCMPEVGATDADLQEMVKKQPASTYAGKCLRACVMKNIGILDANGKLDTEAGHEKAKQYTGNDPAKLKIALEIGDTCAAITVPDDHCEAAEAYGTCFRGEAKKHGLL.

The first 21 residues, 1–21 (MQSTPIILVAIVLLGAALVRA), serve as a signal peptide directing secretion. 3 cysteine pairs are disulfide-bonded: Cys38–Cys69, Cys65–Cys123, and Cys113–Cys132.

Expressed in antenna, mostly on the medial and posterior surface of the third antennal segment.

Its subcellular location is the secreted. This is General odorant-binding protein 28a (Obp28a) from Drosophila melanogaster (Fruit fly).